The chain runs to 1096 residues: DNA-directed RNA polymerase subunit beta (1096 aa).

This sequence belongs to the RNA polymerase beta chain family. In plastids the minimal PEP RNA polymerase catalytic core is composed of four subunits: alpha, beta, beta', and beta''. When a (nuclear-encoded) sigma factor is associated with the core the holoenzyme is formed, which can initiate transcription.

It is found in the plastid. It localises to the chloroplast. It catalyses the reaction RNA(n) + a ribonucleoside 5'-triphosphate = RNA(n+1) + diphosphate. Functionally, DNA-dependent RNA polymerase catalyzes the transcription of DNA into RNA using the four ribonucleoside triphosphates as substrates. This Guillardia theta (Cryptophyte) protein is DNA-directed RNA polymerase subunit beta.